An 89-amino-acid chain; its full sequence is Transcription elongation factor 1 homolog (89 aa).

Positions 25, 28, 49, and 52 each coordinate Zn(2+).

It belongs to the ELOF1 family.

It localises to the nucleus. Its function is as follows. Transcription elongation factor implicated in the maintenance of proper chromatin structure in actively transcribed regions. The polypeptide is Transcription elongation factor 1 homolog (Oryza sativa subsp. japonica (Rice)).